The chain runs to 412 residues: MKMHLQRALVVLALLNFATVSLSLSTCTTLDFGHIKKKRVEAIRGQILSKLRLTSPPEPTVMTHVPYQVLALYNSTRELLEEMHGEREEGCTQENTESEYYAKEIHKFDMIQGLAEHNELAVCPKGITSKVFRFNVSSVEKNRTNLFRAEFRVLRVPNPSSKRNEQRIELFQILRPDEHIAKQRYIGGKNLPTRGTAEWLSFDVTDTVREWLLRRESNLGLEISIHCPCHTFQPNGDILENIHEVMEIKFKGVDNEDDHGRGDLGRLKKQKDHHNPHLILMMIPPHRLDNPGQGGQRKKRALDTNYCFRNLEENCCVRPLYIDFRQDLGWKWVHEPKGYYANFCSGPCPYLRSADTTHSTVLGLYNTLNPEASASPCCVPQDLEPLTILYYVGRTPKVEQLSNMVVKSCKCS.

A signal peptide spans 1–23; that stretch reads MKMHLQRALVVLALLNFATVSLS. Residues asparagine 74, asparagine 135, and asparagine 142 are each glycosylated (N-linked (GlcNAc...) asparagine). The Cell attachment site signature appears at 261–263; that stretch reads RGD. Glutamine 293 bears the N5-methylglutamine mark. 4 cysteine pairs are disulfide-bonded: cysteine 307-cysteine 316, cysteine 315-cysteine 378, cysteine 344-cysteine 409, and cysteine 348-cysteine 411.

Belongs to the TGF-beta family. In terms of assembly, interacts with ASPN. Latency-associated peptide: Homodimer; disulfide-linked. Latency-associated peptide: Interacts with Transforming growth factor beta-3 (TGF-beta-3) chain; interaction is non-covalent and maintains (TGF-beta-3) in a latent state. Latency-associated peptide: Interacts with LRRC32/GARP; leading to regulate activation of TGF-beta-3 and promote epithelial fusion during palate development. Latency-associated peptide: Interacts (via cell attachment site) with integrins, leading to release of the active TGF-beta-3. Transforming growth factor beta-3: Homodimer; disulfide-linked. Transforming growth factor beta-3: Interacts with TGF-beta receptors (TGFBR1 and TGFBR2), leading to signal transduction. Transforming growth factor beta-3 proprotein: The precursor proprotein is cleaved in the Golgi apparatus to form Transforming growth factor beta-3 (TGF-beta-3) and Latency-associated peptide (LAP) chains, which remain non-covalently linked, rendering TGF-beta-3 inactive. In terms of processing, methylated at Gln-293 by N6AMT1.

It localises to the secreted. The protein resides in the extracellular space. It is found in the extracellular matrix. In terms of biological role, transforming growth factor beta-3 proprotein: Precursor of the Latency-associated peptide (LAP) and Transforming growth factor beta-3 (TGF-beta-3) chains, which constitute the regulatory and active subunit of TGF-beta-3, respectively. Functionally, required to maintain the Transforming growth factor beta-3 (TGF-beta-3) chain in a latent state during storage in extracellular matrix. Associates non-covalently with TGF-beta-3 and regulates its activation via interaction with 'milieu molecules', such as LTBP1 and LRRC32/GARP, that control activation of TGF-beta-3. Interaction with integrins results in distortion of the Latency-associated peptide chain and subsequent release of the active TGF-beta-3. Its function is as follows. Transforming growth factor beta-3: Multifunctional protein that regulates embryogenesis and cell differentiation and is required in various processes such as secondary palate development. Activation into mature form follows different steps: following cleavage of the proprotein in the Golgi apparatus, Latency-associated peptide (LAP) and Transforming growth factor beta-3 (TGF-beta-3) chains remain non-covalently linked rendering TGF-beta-3 inactive during storage in extracellular matrix. At the same time, LAP chain interacts with 'milieu molecules', such as LTBP1 and LRRC32/GARP that control activation of TGF-beta-3 and maintain it in a latent state during storage in extracellular milieus. TGF-beta-3 is released from LAP by integrins: integrin-binding results in distortion of the LAP chain and subsequent release of the active TGF-beta-3. Once activated following release of LAP, TGF-beta-3 acts by binding to TGF-beta receptors (TGFBR1 and TGFBR2), which transduce signal. This Homo sapiens (Human) protein is Transforming growth factor beta-3 proprotein (TGFB3).